Reading from the N-terminus, the 267-residue chain is Tryptophan synthase alpha chain (267 aa).

Residues E44 and D55 each act as proton acceptor in the active site.

This sequence belongs to the TrpA family. Tetramer of two alpha and two beta chains.

The enzyme catalyses (1S,2R)-1-C-(indol-3-yl)glycerol 3-phosphate + L-serine = D-glyceraldehyde 3-phosphate + L-tryptophan + H2O. It participates in amino-acid biosynthesis; L-tryptophan biosynthesis; L-tryptophan from chorismate: step 5/5. In terms of biological role, the alpha subunit is responsible for the aldol cleavage of indoleglycerol phosphate to indole and glyceraldehyde 3-phosphate. This Coxiella burnetii (strain Dugway 5J108-111) protein is Tryptophan synthase alpha chain.